We begin with the raw amino-acid sequence, 20 residues long: Pregnancy-associated glycoprotein 57 (20 aa).

Belongs to the peptidase A1 family. Glycosylated.

The protein resides in the secreted. The sequence is that of Pregnancy-associated glycoprotein 57 from Ovis aries (Sheep).